Reading from the N-terminus, the 430-residue chain is UDP-N-acetylmuramoylalanine--D-glutamate ligase (430 aa).

109–115 (GTDGKST) is a binding site for ATP.

This sequence belongs to the MurCDEF family.

Its subcellular location is the cytoplasm. It catalyses the reaction UDP-N-acetyl-alpha-D-muramoyl-L-alanine + D-glutamate + ATP = UDP-N-acetyl-alpha-D-muramoyl-L-alanyl-D-glutamate + ADP + phosphate + H(+). It participates in cell wall biogenesis; peptidoglycan biosynthesis. Its function is as follows. Cell wall formation. Catalyzes the addition of glutamate to the nucleotide precursor UDP-N-acetylmuramoyl-L-alanine (UMA). The polypeptide is UDP-N-acetylmuramoylalanine--D-glutamate ligase (Thermotoga petrophila (strain ATCC BAA-488 / DSM 13995 / JCM 10881 / RKU-1)).